The sequence spans 396 residues: Growth-regulating factor 1 (396 aa).

A QLQ domain is found at 18 to 53 (PFTASQWQELEHQALIYKYMASGTPIPSDLILPLRR). 2 short sequence motifs (bipartite nuclear localization signal) span residues 86-105 (RKAE…KKWR) and 123-130 (RGKNRSRK). The region spanning 90–134 (DPEPGRCRRTDGKKWRCSKEAYPDSKYCEKHMHRGKNRSRKPVEM) is the WRC domain. The disordered stretch occupies residues 117-176 (CEKHMHRGKNRSRKPVEMSLATPPPPSSSATSAASNSSAGVAPTTTTTSSPAPSYSRPAP). Over residues 120–129 (HMHRGKNRSR) the composition is skewed to basic residues. The span at 144–174 (SSATSAASNSSAGVAPTTTTTSSPAPSYSRP) shows a compositional bias: low complexity.

Belongs to the GRF family. In terms of tissue distribution, highly expressed in the intercalary meristem of the internode and in the shoot apex. Detected in the leaf primordia and emerging leaves in the uppermost node. Preferentially localized in the epidermis and in the tissues surrounding vascular bundles of the intercalary meristem of the internode and in adventitious roots of the second highest node. Low expression in the coleoptile and in the youngest leaf.

Its subcellular location is the nucleus. In terms of biological role, transcription activator that plays a regulatory role in gibberellin-induced stem elongation. The polypeptide is Growth-regulating factor 1 (GRF1) (Oryza sativa subsp. indica (Rice)).